A 233-amino-acid chain; its full sequence is Ribonuclease 3 (233 aa).

The 130-residue stretch at 7 to 136 folds into the RNase III domain; that stretch reads KQYLLSEFNI…FIGALYLDQG (130 aa). Glu49 contacts Mg(2+). Residue Asp53 is part of the active site. Mg(2+) contacts are provided by Asp122 and Glu125. Glu125 is an active-site residue. Residues 162–232 enclose the DRBM domain; it reads DFKSRLQEKL…ARAALKLLEE (71 aa).

The protein belongs to the ribonuclease III family. As to quaternary structure, homodimer. Requires Mg(2+) as cofactor.

The protein resides in the cytoplasm. The catalysed reaction is Endonucleolytic cleavage to 5'-phosphomonoester.. Its function is as follows. Digests double-stranded RNA. Involved in the processing of primary rRNA transcript to yield the immediate precursors to the large and small rRNAs (23S and 16S). Processes some mRNAs, and tRNAs when they are encoded in the rRNA operon. Processes pre-crRNA and tracrRNA of type II CRISPR loci if present in the organism. This Leuconostoc citreum (strain KM20) protein is Ribonuclease 3.